The sequence spans 86 residues: uncharacterized protein (86 aa).

4Fe-4S ferredoxin-type domains are found at residues 1 to 29 and 31 to 65; these read MALL…IGDE and YVID…PDPE. [4Fe-4S] cluster-binding residues include Cys-9, Cys-12, Cys-15, Cys-19, Cys-38, Cys-41, Cys-50, and Cys-54.

It depends on [4Fe-4S] cluster as a cofactor.

This is an uncharacterized protein from Haemophilus influenzae (strain ATCC 51907 / DSM 11121 / KW20 / Rd).